Consider the following 607-residue polypeptide: Aspartate--tRNA(Asp/Asn) ligase (607 aa).

E173 lines the L-aspartate pocket. The aspartate stretch occupies residues 197 to 200; that stretch reads QLFK. L-aspartate is bound at residue R219. Residues 219 to 221 and Q228 contribute to the ATP site; that span reads RDE. An L-aspartate-binding site is contributed by H456. E498 provides a ligand contact to ATP. R505 is an L-aspartate binding site. 550-553 contacts ATP; that stretch reads GLDR.

This sequence belongs to the class-II aminoacyl-tRNA synthetase family. Type 1 subfamily. Homodimer.

Its subcellular location is the cytoplasm. It carries out the reaction tRNA(Asx) + L-aspartate + ATP = L-aspartyl-tRNA(Asx) + AMP + diphosphate. In terms of biological role, aspartyl-tRNA synthetase with relaxed tRNA specificity since it is able to aspartylate not only its cognate tRNA(Asp) but also tRNA(Asn). Reaction proceeds in two steps: L-aspartate is first activated by ATP to form Asp-AMP and then transferred to the acceptor end of tRNA(Asp/Asn). This Magnetococcus marinus (strain ATCC BAA-1437 / JCM 17883 / MC-1) protein is Aspartate--tRNA(Asp/Asn) ligase.